The following is a 74-amino-acid chain: Exodeoxyribonuclease 7 small subunit (74 aa).

It belongs to the XseB family. As to quaternary structure, heterooligomer composed of large and small subunits.

The protein localises to the cytoplasm. It carries out the reaction Exonucleolytic cleavage in either 5'- to 3'- or 3'- to 5'-direction to yield nucleoside 5'-phosphates.. Its function is as follows. Bidirectionally degrades single-stranded DNA into large acid-insoluble oligonucleotides, which are then degraded further into small acid-soluble oligonucleotides. This is Exodeoxyribonuclease 7 small subunit from Neisseria meningitidis serogroup A / serotype 4A (strain DSM 15465 / Z2491).